The sequence spans 214 residues: Small ribosomal subunit protein eS6 (214 aa).

The protein belongs to the eukaryotic ribosomal protein eS6 family.

In Saccharolobus islandicus (strain Y.G.57.14 / Yellowstone #1) (Sulfolobus islandicus), this protein is Small ribosomal subunit protein eS6 (rps6e).